Here is a 620-residue protein sequence, read N- to C-terminus: 1-deoxy-D-xylulose-5-phosphate synthase (620 aa).

Thiamine diphosphate-binding positions include H80 and 121-123 (GHS). Residue D152 coordinates Mg(2+). Thiamine diphosphate-binding positions include 153 to 154 (GA), N181, Y288, and E370. N181 contributes to the Mg(2+) binding site.

Belongs to the transketolase family. DXPS subfamily. In terms of assembly, homodimer. Mg(2+) serves as cofactor. It depends on thiamine diphosphate as a cofactor.

The catalysed reaction is D-glyceraldehyde 3-phosphate + pyruvate + H(+) = 1-deoxy-D-xylulose 5-phosphate + CO2. The protein operates within metabolic intermediate biosynthesis; 1-deoxy-D-xylulose 5-phosphate biosynthesis; 1-deoxy-D-xylulose 5-phosphate from D-glyceraldehyde 3-phosphate and pyruvate: step 1/1. In terms of biological role, catalyzes the acyloin condensation reaction between C atoms 2 and 3 of pyruvate and glyceraldehyde 3-phosphate to yield 1-deoxy-D-xylulose-5-phosphate (DXP). This is 1-deoxy-D-xylulose-5-phosphate synthase from Salmonella typhi.